The following is a 274-amino-acid chain: UPF0173 metal-dependent hydrolase Adeh_1068 (274 aa).

It belongs to the UPF0173 family.

In Anaeromyxobacter dehalogenans (strain 2CP-C), this protein is UPF0173 metal-dependent hydrolase Adeh_1068.